The following is a 235-amino-acid chain: Large ribosomal subunit protein uL1 (235 aa).

It belongs to the universal ribosomal protein uL1 family. As to quaternary structure, part of the 50S ribosomal subunit.

Functionally, binds directly to 23S rRNA. The L1 stalk is quite mobile in the ribosome, and is involved in E site tRNA release. In terms of biological role, protein L1 is also a translational repressor protein, it controls the translation of the L11 operon by binding to its mRNA. In Fervidobacterium nodosum (strain ATCC 35602 / DSM 5306 / Rt17-B1), this protein is Large ribosomal subunit protein uL1.